Here is a 102-residue protein sequence, read N- to C-terminus: Small ribosomal subunit protein uS14 (102 aa).

Belongs to the universal ribosomal protein uS14 family. In terms of assembly, part of the 30S ribosomal subunit. Contacts proteins S3 and S10.

Functionally, binds 16S rRNA, required for the assembly of 30S particles and may also be responsible for determining the conformation of the 16S rRNA at the A site. In Wolbachia pipientis subsp. Culex pipiens (strain wPip), this protein is Small ribosomal subunit protein uS14.